The sequence spans 1031 residues: MTREYAELHCLSNFSFQRGASSARELFERALRHGYKALAITDECTLAGIVRAWQASKSTGLPLIVGSEMHIENGPKVVLLVENQAGYEALCKLITVARRRAGKGEYRVLREDFEPAPDGLLALWLPDLDGNAQACLAGGRWLRERFAERLWLGVGLHRGPDDEQRLADLLALAQSLGVPAVASGDVHMHARGRRALQDTMTAIRHHTTVAEAGHLLFANGERHLRPLDALSEHYPDWLLAESVRIARRCTFDLGDLKYEYPHELVPKGQTSTSWLRELTERGVRRRWPGGLTPATRAQVEKELALIAEKKFDSYFLTVHDIVEFARSQHILCQGRGSAANSAVCYALGITELNPEQSNLLFERFISRERNEPPDIDVDFEHDRREEVIQYIFRRYGRGRAALTAVASTYHGSGAMRDVAKVLGLPPEQINALAEAFSRWSDSLPSPERLREYGFDADTPILKRVLALTGELIGFPRHLSQHPGGFVISEHPLETLVPVENAAMADRTIIQWDKDDLDLVGLLKVDILALGMLSALRRTFDLVHLHRGQRWTLATLPGDDRKTYEMISRADTIGVFQIESRAQMAMLPRLRPEKFYDLVIEVAIVRPGPIQGDMVHPYLRRRNGEEDVTYPPKLESVFKRTLGVPLFQEQVMEVAILAADYTPGEADELRRAMAAWKRHGGLEPHRERLRTGMLKNGYEADFADRIFEQIKGFGSYGFPESHAASFALLTYASCWLKCHEPAAFTCALINSWPMGFYSPDQLLQDARRHHIEIRPVDVRYSDWDCSLEPLDHPDRTRNLAIRLGLRMVRSFREEDALRIEVARAKRPFVDATDLTLRAELDARAAEALADSGALRGLIGHRHRARWEVAGVEAQRPLFDDLPSEETQVTLPLPTVAEDLVADYTTLGTTLGPHPLALLRRQLAAKRFRSSQDLLHLENDRTLSVAGLVIGRQRPGTASGVTFVTLEDEFGMVNVVVWRDLAERQRKVLVGSQLLQVFGRLESKSGVRHLIAQRLYDLTPLLTGLDVRSRDFQ.

This sequence belongs to the DNA polymerase type-C family. DnaE2 subfamily.

It is found in the cytoplasm. The enzyme catalyses DNA(n) + a 2'-deoxyribonucleoside 5'-triphosphate = DNA(n+1) + diphosphate. In terms of biological role, DNA polymerase involved in damage-induced mutagenesis and translesion synthesis (TLS). It is not the major replicative DNA polymerase. The sequence is that of Error-prone DNA polymerase from Pseudomonas syringae pv. syringae (strain B728a).